Consider the following 449-residue polypeptide: Na(+)-translocating NADH-quinone reductase subunit A (449 aa).

The protein belongs to the NqrA family. As to quaternary structure, composed of six subunits; NqrA, NqrB, NqrC, NqrD, NqrE and NqrF.

The enzyme catalyses a ubiquinone + n Na(+)(in) + NADH + H(+) = a ubiquinol + n Na(+)(out) + NAD(+). Functionally, NQR complex catalyzes the reduction of ubiquinone-1 to ubiquinol by two successive reactions, coupled with the transport of Na(+) ions from the cytoplasm to the periplasm. NqrA to NqrE are probably involved in the second step, the conversion of ubisemiquinone to ubiquinol. The polypeptide is Na(+)-translocating NADH-quinone reductase subunit A (Actinobacillus pleuropneumoniae serotype 5b (strain L20)).